Here is a 140-residue protein sequence, read N- to C-terminus: Profilin-1 (140 aa).

Alanine 2 carries the post-translational modification N-acetylalanine. Serine 28 bears the Phosphoserine mark. A Glycyl lysine isopeptide (Lys-Gly) (interchain with G-Cter in SUMO2); alternate cross-link involves residue lysine 54. A Glycyl lysine isopeptide (Lys-Gly) (interchain with G-Cter in ubiquitin); alternate cross-link involves residue lysine 54. The residue at position 57 (serine 57) is a Phosphoserine. N6-acetyllysine is present on lysine 108. Tyrosine 129 is modified (phosphotyrosine). Residue serine 138 is modified to Phosphoserine; by ROCK1.

It belongs to the profilin family. Found in a complex with XPO6, Ran, ACTB and PFN1. Interacts with ACTB. Interacts with VASP. Interacts with HTT. Interacts with SH3BGRL. Occurs in many kinds of cells as a complex with monomeric actin in a 1:1 ratio. Interacts with ACTMAP. Phosphorylation at Ser-138 reduces its affinity for G-actin and blocks its interaction with HTT, reducing its ability to inhibit androgen receptor (AR) and HTT aggregation.

The protein resides in the cytoplasm. It is found in the cytoskeleton. Functionally, binds to actin and affects the structure of the cytoskeleton. At high concentrations, profilin prevents the polymerization of actin, whereas it enhances it at low concentrations. By binding to PIP2, it inhibits the formation of IP3 and DG. Inhibits androgen receptor (AR) and HTT aggregation and binding of G-actin is essential for its inhibition of AR. The polypeptide is Profilin-1 (Pfn1) (Mus musculus (Mouse)).